Consider the following 211-residue polypeptide: Redox-sensing transcriptional repressor Rex (211 aa).

The segment at residues 17–56 (KYHRYLEELLRNEVDRISSKELSKKIGFTASQIRQDFNCF) is a DNA-binding region (H-T-H motif). NAD(+) is bound at residue 91-96 (GGGNIG).

Belongs to the transcriptional regulatory Rex family. As to quaternary structure, homodimer.

It is found in the cytoplasm. Its function is as follows. Modulates transcription in response to changes in cellular NADH/NAD(+) redox state. This chain is Redox-sensing transcriptional repressor Rex, found in Clostridium tetani (strain Massachusetts / E88).